The sequence spans 407 residues: MKSILWHNLKLCAHGDPNDTIADAAIAVNGDGTIAWTGRASDVPAGYVHWPREDLRGAWVTPGLVDCHTHLVYGGQRADEFAQRLAGASYEEIAQRGGGIVSTVRATRDASEAALFEQACARLRPLLAEGVTAIEIKSGYGLELASERRMLRVARQLGERFPVSVYTTFLGAHALPPEYAGRADEYIDEVCERMLPALADEGLVDAVDVFCERIGFTLAQSERVFEAAARRGLPVKMHAEQLSNGGGSALAARYRALSADHLEYLDAAGVAAMRASGTTAVLLPGAYYFIRETKLPPIDLLRRHGVPIALATDHNPGTSPLTSLLLTMNMGCTVFKLTVQEALLGVTRHAAAALGASDRHGSLAPGRQADFAVWPVSTLAELAYWFGRPLCERVVKGGVTVFTRDAR.

Positions 68 and 70 each coordinate Fe(3+). H68 and H70 together coordinate Zn(2+). The 4-imidazolone-5-propanoate site is built by R77, Y140, and H173. Residue Y140 participates in N-formimidoyl-L-glutamate binding. Residue H238 participates in Fe(3+) binding. Residue H238 participates in Zn(2+) binding. Q241 lines the 4-imidazolone-5-propanoate pocket. Fe(3+) is bound at residue D313. Residue D313 coordinates Zn(2+). N315 and G317 together coordinate N-formimidoyl-L-glutamate. Position 318 (T318) interacts with 4-imidazolone-5-propanoate.

Belongs to the metallo-dependent hydrolases superfamily. HutI family. Requires Zn(2+) as cofactor. It depends on Fe(3+) as a cofactor.

The protein resides in the cytoplasm. It carries out the reaction 4-imidazolone-5-propanoate + H2O = N-formimidoyl-L-glutamate. It functions in the pathway amino-acid degradation; L-histidine degradation into L-glutamate; N-formimidoyl-L-glutamate from L-histidine: step 3/3. In terms of biological role, catalyzes the hydrolytic cleavage of the carbon-nitrogen bond in imidazolone-5-propanoate to yield N-formimidoyl-L-glutamate. It is the third step in the universal histidine degradation pathway. The sequence is that of Imidazolonepropionase from Burkholderia pseudomallei (strain 1710b).